We begin with the raw amino-acid sequence, 982 residues long: Hunchback-like protein (982 aa).

The interval 87-194 is disordered; it reads QPGEKIHPDG…SNYQVTSEPV (108 aa). Over residues 101 to 110 the composition is skewed to basic and acidic residues; it reads PKEDGRKSSE. Over residues 111-132 the composition is skewed to polar residues; the sequence is HTNSYDVSASQSPSNDGAQSDS. Residues 142–152 show a composition bias toward acidic residues; it reads CMTETEMDTDE. The segment covering 153–175 has biased composition (basic and acidic residues); it reads KDSTIKPEDQATPKLEEGSDSKP. Residues 176-193 are compositionally biased toward polar residues; the sequence is ESTSVEGTSSNYQVTSEP. 7 consecutive C2H2-type zinc fingers follow at residues 336–358, 361–384, 538–560, 567–589, 595–617, 623–647, and 734–756; these read LVCP…MNTH, HQCS…RESH, FKCK…ARTH, LNCQ…YRNH, FQCK…MKSH, FRCM…KYNH, and LKCS…SMSH. The interval 377 to 415 is disordered; it reads KKHMRESHTVEEQLRAGFESEPAKESASSPKNLSLSKDG. Positions 811-896 are disordered; that stretch reads EEMDQGSDSA…PPLHSSSIVA (86 aa). 2 stretches are compositionally biased toward polar residues: residues 816–831 and 843–862; these read GSDS…QISS and SLEQ…SNDS. Over residues 863–875 the composition is skewed to basic and acidic residues; the sequence is AMEKDGESADDAP. 2 C2H2-type zinc fingers span residues 929 to 951 and 957 to 981; these read FYCD…MRFH and FMCS…QARH.

The protein belongs to the hunchback C2H2-type zinc-finger protein family. In terms of tissue distribution, expressed primarily in ectodermal cells during embryonic and larval development.

The protein resides in the nucleus. Its function is as follows. Required for the late stages of development. Plays a role in the developmental timing of postembryonic hypodermal seam cell fusion events and adult alae production. The polypeptide is Hunchback-like protein (Caenorhabditis elegans).